A 256-amino-acid chain; its full sequence is MEPTSSLNRGDRKKGSSLVTGSEVQSQSNGASCFITTDSEKSLVSRQASQVEQIELRTYVFLDSLQPQLAAYMGTVSRGFLPIPGDSCLWMEVSPGMAVHRVTDIALKASNVRLGQMIVERAFGSLALYHKDQSTVLHSGDVVLDAIGSEVRKRTKPSTSWTEVICAITPDHAVLINRQNRSGSMIQSGMSMFILETEPAGYVLKAANEAEKSANITIIDVKAVGAFGRLTLAGKEGDVEEAAAAAIRAIDQISNY.

Positions methionine 1 to valine 24 are disordered. BMC circularly permuted domains are found at residues glutamate 55 to proline 157 and serine 158 to tyrosine 256. A Gates the pore motif is present at residues glutamate 120–arginine 121.

Belongs to the EutL/PduB family. As to quaternary structure, homotrimer. Forms a dimer of stacked trimers, the same faces interact. A CsoS1-CsoS1D-CsoS2 complex can be isolated following expression in E.coli.

The protein resides in the carboxysome. Its function is as follows. Part of the carboxysome shell, a polyhedral inclusion where RuBisCO (ribulose bisphosphate carboxylase, cbbL-cbbS) is sequestered. It may control transport of RuBisCO reactants in and out of the carboxysome. There are estimated to be 6 CsoS1D hexamers per carboxysome. In Prochlorococcus marinus subsp. pastoris (strain CCMP1986 / NIES-2087 / MED4), this protein is Carboxysome shell protein CsoS1D.